A 173-amino-acid polypeptide reads, in one-letter code: uncharacterized protein (173 aa).

4 helical membrane-spanning segments follow: residues 9-29 (FSICICQIFIIYFIFFLLLCV), 32-52 (ICSALSNGFNFLIIYGGTFFH), 100-120 (MFLCFFSSIVFASAFVFSFIV), and 127-147 (FLFLSLNSGFSFTGYITGLYP).

The protein localises to the membrane. This is an uncharacterized protein from Saccharomyces cerevisiae (strain ATCC 204508 / S288c) (Baker's yeast).